The following is a 230-amino-acid chain: Lipoprotein-releasing system ATP-binding protein LolD (230 aa).

In terms of domain architecture, ABC transporter spans 6–230 (LQASNLEKEY…GHFILPSETL (225 aa)). Position 42 to 49 (42 to 49 (GSSGSGKS)) interacts with ATP.

The protein belongs to the ABC transporter superfamily. Lipoprotein translocase (TC 3.A.1.125) family. In terms of assembly, the complex is composed of two ATP-binding proteins (LolD) and two transmembrane proteins (LolC and LolE).

The protein resides in the cell inner membrane. Its function is as follows. Part of the ABC transporter complex LolCDE involved in the translocation of mature outer membrane-directed lipoproteins, from the inner membrane to the periplasmic chaperone, LolA. Responsible for the formation of the LolA-lipoprotein complex in an ATP-dependent manner. The chain is Lipoprotein-releasing system ATP-binding protein LolD from Hydrogenovibrio crunogenus (strain DSM 25203 / XCL-2) (Thiomicrospira crunogena).